The primary structure comprises 419 residues: Zinc finger protein Pegasus (419 aa).

3 consecutive C2H2-type zinc fingers follow at residues 79–101, 107–129, and 135–158; these read LKCR…IRIH, HRCH…MRSH, and YKCE…RRRH. Disordered stretches follow at residues 203–255 and 310–360; these read LQKP…DQDM and SVNT…TPVQ. A compositionally biased stretch (basic and acidic residues) spans 208 to 228; it reads SEQHHLGDFTHDLPPHAHLHQ. 2 stretches are compositionally biased toward polar residues: residues 310-320 and 341-360; these read SVNTAQASSPI and ERTS…TPVQ. 2 consecutive C2H2-type zinc fingers follow at residues 366-388 and 394-418; these read HHCP…MGCH and FQCN…RGQH.

This sequence belongs to the Ikaros C2H2-type zinc-finger protein family. As to quaternary structure, probably self-associates.

The protein localises to the nucleus. Its function is as follows. Transcriptional repressor that binds the core 5'GNNTGTNG-3' DNA consensus sequence. This Danio rerio (Zebrafish) protein is Zinc finger protein Pegasus (ikzf5).